The primary structure comprises 292 residues: 2-(5''-triphosphoribosyl)-3'-dephosphocoenzyme-A synthase (292 aa).

Belongs to the CitG/MdcB family.

It carries out the reaction 3'-dephospho-CoA + ATP = 2'-(5''-triphospho-alpha-D-ribosyl)-3'-dephospho-CoA + adenine. In terms of biological role, catalyzes the formation of 2-(5''-triphosphoribosyl)-3'-dephosphocoenzyme-A, the precursor of the prosthetic group of the holo-acyl carrier protein (gamma chain) of citrate lyase, from ATP and dephospho-CoA. This Escherichia coli O127:H6 (strain E2348/69 / EPEC) protein is 2-(5''-triphosphoribosyl)-3'-dephosphocoenzyme-A synthase.